The sequence spans 635 residues: Threonine--tRNA ligase (635 aa).

The region spanning 1-61 is the TGS domain; sequence MIAITLPDGS…DRDVALAIIT (61 aa). A catalytic region spans residues 242 to 533; it reads DHRKLGKSLD…LLENHAGALP (292 aa). The Zn(2+) site is built by C333, H384, and H510.

This sequence belongs to the class-II aminoacyl-tRNA synthetase family. In terms of assembly, homodimer. It depends on Zn(2+) as a cofactor.

The protein localises to the cytoplasm. The catalysed reaction is tRNA(Thr) + L-threonine + ATP = L-threonyl-tRNA(Thr) + AMP + diphosphate + H(+). Its function is as follows. Catalyzes the attachment of threonine to tRNA(Thr) in a two-step reaction: L-threonine is first activated by ATP to form Thr-AMP and then transferred to the acceptor end of tRNA(Thr). Also edits incorrectly charged L-seryl-tRNA(Thr). The polypeptide is Threonine--tRNA ligase (Cupriavidus pinatubonensis (strain JMP 134 / LMG 1197) (Cupriavidus necator (strain JMP 134))).